The chain runs to 218 residues: Large ribosomal subunit protein bL25 (218 aa).

Disordered stretches follow at residues 1–20 and 185–218; these read MKTH…GPAR and PTAA…ASEE. Positions 192–218 are enriched in acidic residues; it reads EEGEEGEEGEEGGEGGEAEGAEAASEE.

This sequence belongs to the bacterial ribosomal protein bL25 family. CTC subfamily. Part of the 50S ribosomal subunit; part of the 5S rRNA/L5/L18/L25 subcomplex. Contacts the 5S rRNA. Binds to the 5S rRNA independently of L5 and L18.

In terms of biological role, this is one of the proteins that binds to the 5S RNA in the ribosome where it forms part of the central protuberance. This Desulfatibacillum aliphaticivorans protein is Large ribosomal subunit protein bL25.